A 644-amino-acid chain; its full sequence is Chaperone protein DnaK (644 aa).

Threonine 199 bears the Phosphothreonine; by autocatalysis mark. The interval 589–644 (QALAEASHKLAEKMYSQGQGPQAGPGEEPSGQSGGTEKPVEGEVVDAEFEEVKNKK) is disordered. Low complexity predominate over residues 604–619 (SQGQGPQAGPGEEPSG).

Belongs to the heat shock protein 70 family.

Functionally, acts as a chaperone. The protein is Chaperone protein DnaK of Nitrosospira multiformis (strain ATCC 25196 / NCIMB 11849 / C 71).